We begin with the raw amino-acid sequence, 152 residues long: uncharacterized protein (152 aa).

The protein resides in the mitochondrion. This is an uncharacterized protein from Arabidopsis thaliana (Mouse-ear cress).